A 135-amino-acid chain; its full sequence is Probable histone H2A.8 (135 aa).

This sequence belongs to the histone H2A family. The nucleosome is a histone octamer containing two molecules each of H2A, H2B, H3 and H4 assembled in one H3-H4 heterotetramer and two H2A-H2B heterodimers. The octamer wraps approximately 147 bp of DNA.

The protein resides in the nucleus. The protein localises to the chromosome. Functionally, core component of nucleosome. Nucleosomes wrap and compact DNA into chromatin, limiting DNA accessibility to the cellular machineries which require DNA as a template. Histones thereby play a central role in transcription regulation, DNA repair, DNA replication and chromosomal stability. DNA accessibility is regulated via a complex set of post-translational modifications of histones, also called histone code, and nucleosome remodeling. The sequence is that of Probable histone H2A.8 from Oryza sativa subsp. indica (Rice).